A 187-amino-acid chain; its full sequence is Calmodulin-like protein 30 (187 aa).

Residues 21 to 47 (KPSRMFSRDRQSSGLSSPGPGGFSQPS) form a disordered region. The segment covering 32–47 (SSGLSSPGPGGFSQPS) has biased composition (low complexity). EF-hand domains are found at residues 46-81 (PSVNEMRRVFSRFDLDKDGKISQTEYKVVLRALGQE), 82-117 (RAIEDVPKIFKAVDLDGDGFIDFREFIDAYKRSGGI), 129-152 (FDLNGDGKISAEEVMSVLWKLGER), and 153-187 (CSLEDCNRMVRAVDADGDGLVNMEEFIKMMSSNNV). Ca(2+) is bound by residues Asp59, Asp61, Asp63, Lys65, Glu70, Asp95, Asp97, Asp99, Glu106, Asp130, Asn132, Asp134, Lys136, Glu141, Asp166, Asp168, Asp170, and Glu177.

The protein belongs to the calmodulin family.

In terms of biological role, potential calcium sensor. This chain is Calmodulin-like protein 30, found in Arabidopsis thaliana (Mouse-ear cress).